The sequence spans 138 residues: Putative pre-16S rRNA nuclease (138 aa).

It belongs to the YqgF nuclease family.

It localises to the cytoplasm. In terms of biological role, could be a nuclease involved in processing of the 5'-end of pre-16S rRNA. This is Putative pre-16S rRNA nuclease from Geobacillus sp. (strain WCH70).